Reading from the N-terminus, the 370-residue chain is Histidinol-phosphate aminotransferase 2 (370 aa).

N6-(pyridoxal phosphate)lysine is present on Lys-230.

The protein belongs to the class-II pyridoxal-phosphate-dependent aminotransferase family. Histidinol-phosphate aminotransferase subfamily. Homodimer. Requires pyridoxal 5'-phosphate as cofactor.

The enzyme catalyses L-histidinol phosphate + 2-oxoglutarate = 3-(imidazol-4-yl)-2-oxopropyl phosphate + L-glutamate. The protein operates within amino-acid biosynthesis; L-histidine biosynthesis; L-histidine from 5-phospho-alpha-D-ribose 1-diphosphate: step 7/9. The sequence is that of Histidinol-phosphate aminotransferase 2 from Pseudomonas fluorescens (strain ATCC BAA-477 / NRRL B-23932 / Pf-5).